A 76-amino-acid chain; its full sequence is uncharacterized protein (76 aa).

A helical transmembrane segment spans residues 40–60 (IVLNLVVLVGVVPLTWMFLGQ).

The protein localises to the membrane. This is an uncharacterized protein from Dictyostelium discoideum (Social amoeba).